We begin with the raw amino-acid sequence, 864 residues long: Bifunctional uridylyltransferase/uridylyl-removing enzyme (864 aa).

The tract at residues 1 to 328 (MLFPYFPLSE…QTNEPVQVRL (328 aa)) is uridylyltransferase. A uridylyl-removing region spans residues 329–686 (LDKEFQCVNN…ISNRFSEGGT (358 aa)). The region spanning 446–562 (VDEHIVRTLL…LHFAEAVQNN (117 aa)) is the HD domain. 2 consecutive ACT domains span residues 687–766 (EIFV…TFRA) and 793–864 (EMEL…LEPK).

This sequence belongs to the GlnD family. Requires Mg(2+) as cofactor.

The catalysed reaction is [protein-PII]-L-tyrosine + UTP = [protein-PII]-uridylyl-L-tyrosine + diphosphate. The enzyme catalyses [protein-PII]-uridylyl-L-tyrosine + H2O = [protein-PII]-L-tyrosine + UMP + H(+). With respect to regulation, uridylyltransferase (UTase) activity is inhibited by glutamine, while glutamine activates uridylyl-removing (UR) activity. Functionally, modifies, by uridylylation and deuridylylation, the PII regulatory proteins (GlnB and homologs), in response to the nitrogen status of the cell that GlnD senses through the glutamine level. Under low glutamine levels, catalyzes the conversion of the PII proteins and UTP to PII-UMP and PPi, while under higher glutamine levels, GlnD hydrolyzes PII-UMP to PII and UMP (deuridylylation). Thus, controls uridylylation state and activity of the PII proteins, and plays an important role in the regulation of nitrogen assimilation and metabolism. In Pasteurella multocida (strain Pm70), this protein is Bifunctional uridylyltransferase/uridylyl-removing enzyme.